The primary structure comprises 336 residues: MAFLSSLLASLLLVGLLIQITGAQPIGVCYGKIANNLPSDQDVIKLYNSNNIKKMRIYFPETNVFNALKGSNIEIILDVPNQDLEALANPSKRQGWVQDNIRNHFPDVKFKYIAVGNEVDPGRDSGKYARFVGPAMENIYNALSSAGLQNQIKVSTATYLGLLTNTYPPRDSIFRDEYKSFINPIIGFLSRHNLPLLANIYPYFGHADDNVPLPYALFKQQGLNDAGYQNLFDALVDSMYFATEKLGGQNIEIIVSESGWPSEGHPSATLENAMTYYTNLINHVKGGAGTPKKPGRTIETYLFAMFDENRKDGKPSEQHFGLFKPDQRPKYQLKFD.

The signal sequence occupies residues 1-23 (MAFLSSLLASLLLVGLLIQITGA). Pyrrolidone carboxylic acid is present on glutamine 24. Glutamate 118 acts as the Proton donor in catalysis. The Nucleophile role is filled by glutamate 257.

It belongs to the glycosyl hydrolase 17 family.

The protein resides in the secreted. It localises to the extracellular space. It carries out the reaction Hydrolysis of (1-&gt;3)-beta-D-glucosidic linkages in (1-&gt;3)-beta-D-glucans.. Its function is as follows. Implicated in the defense of plants against pathogens. This is Glucan endo-1,3-beta-glucosidase A from Solanum lycopersicum (Tomato).